Here is a 246-residue protein sequence, read N- to C-terminus: Chlorophyll a-b binding protein 6A, chloroplastic (246 aa).

Residues 1–45 constitute a chloroplast transit peptide; that stretch reads MASNTLMSCGIPAVCPSFLSSTKSKFAAAMPVYVGATNFMSRFSM. Trp-49 lines the chlorophyll b pocket. Residues Phe-69, Glu-88, and His-91 each coordinate chlorophyll a. Arg-93 is a chlorophyll b binding site. A helical membrane pass occupies residues 94 to 114; the sequence is WAMLAVPGIIVPEALGLGNWV. Residue Leu-130 coordinates chlorophyll a. The helical transmembrane segment at 133-153 threads the bilayer; sequence PVPWGTLPTILAIEFLAIAFV. The chlorophyll b site is built by Val-134, Glu-154, and Arg-157. Lys-191, Glu-192, Asn-195, Arg-197, Gln-209, and His-225 together coordinate chlorophyll a.

It belongs to the light-harvesting chlorophyll a/b-binding (LHC) protein family. In terms of assembly, the LHC complex consists of chlorophyll a-b binding proteins. Binds at least 14 chlorophylls (8 Chl-a and 6 Chl-b) and carotenoids such as lutein and neoxanthin. is required as a cofactor. In terms of processing, photoregulated by reversible phosphorylation of its threonine residues.

Its subcellular location is the plastid. The protein resides in the chloroplast thylakoid membrane. Its function is as follows. The light-harvesting complex (LHC) functions as a light receptor, it captures and delivers excitation energy to photosystems with which it is closely associated. This is Chlorophyll a-b binding protein 6A, chloroplastic (CAB6A) from Solanum lycopersicum (Tomato).